Here is a 164-residue protein sequence, read N- to C-terminus: NAD(P)H-quinone oxidoreductase subunit I, chloroplastic (164 aa).

2 4Fe-4S ferredoxin-type domains span residues 55–84 (GRIH…VDWK) and 95–124 (LNYS…MTEE). The [4Fe-4S] cluster site is built by C64, C67, C70, C74, C104, C107, C110, and C114.

Belongs to the complex I 23 kDa subunit family. NDH is composed of at least 16 different subunits, 5 of which are encoded in the nucleus. It depends on [4Fe-4S] cluster as a cofactor.

It is found in the plastid. The protein resides in the chloroplast thylakoid membrane. The catalysed reaction is a plastoquinone + NADH + (n+1) H(+)(in) = a plastoquinol + NAD(+) + n H(+)(out). The enzyme catalyses a plastoquinone + NADPH + (n+1) H(+)(in) = a plastoquinol + NADP(+) + n H(+)(out). In terms of biological role, NDH shuttles electrons from NAD(P)H:plastoquinone, via FMN and iron-sulfur (Fe-S) centers, to quinones in the photosynthetic chain and possibly in a chloroplast respiratory chain. The immediate electron acceptor for the enzyme in this species is believed to be plastoquinone. Couples the redox reaction to proton translocation, and thus conserves the redox energy in a proton gradient. The sequence is that of NAD(P)H-quinone oxidoreductase subunit I, chloroplastic from Daucus carota (Wild carrot).